Consider the following 539-residue polypeptide: MFQDLHALHTRTSGRRILDLFAADLRRAERFSADLGEMRLDYSKTQIDDAIRAGLIALCDRAQLADKREAMFAGAPINETEGRAVLHTALRNLDGGPVHVDGAEVMADVRLTLARMRRFAEALRSGALPGAGGAITDVVNIGIGGSDLGPAMAVLALAPYHDGPRCHFVSNVDGAHIADTLRGLDPARTLVIVASKTFTTIETMTNARTARDWMQRGGGDPERQFAAVSTATDRTAAFGIPGDRVFGFADWVGGRYSLWGPIGLSLMIAIGPDDFDAFLRGAQEMDRHFQSAPWEKNLPVMLALTGIWHHQICGHPSRAVLPYDQRLARLPAYLQQLEMESNGKSVAMDGTALDQAAGPIVWGEPGTNGQHAFYQLIHQGKQVVPCEFMVAARGHEPDLAHHHRLLIANCLAQSEALMRGRPLDEARAIAAARGVAGDELERQARHRVFAGNRPSTTLIYPRLTPAMLGRIIALYEHRVFVEGVILGINSFDQWGVELGKELATSLGPVVDGTESAAAKDGSTAALVDYVLAHRDTDLT.

Glu-340 (proton donor) is an active-site residue. Residues His-371 and Lys-500 contribute to the active site.

It belongs to the GPI family.

The protein resides in the cytoplasm. It carries out the reaction alpha-D-glucose 6-phosphate = beta-D-fructose 6-phosphate. Its pathway is carbohydrate biosynthesis; gluconeogenesis. The protein operates within carbohydrate degradation; glycolysis; D-glyceraldehyde 3-phosphate and glycerone phosphate from D-glucose: step 2/4. Functionally, catalyzes the reversible isomerization of glucose-6-phosphate to fructose-6-phosphate. The chain is Glucose-6-phosphate isomerase from Ruegeria pomeroyi (strain ATCC 700808 / DSM 15171 / DSS-3) (Silicibacter pomeroyi).